A 325-amino-acid polypeptide reads, in one-letter code: Elongation factor P--(R)-beta-lysine ligase (325 aa).

76 to 78 (SPE) contacts substrate. Residues 100–102 (RNE) and Asn-109 contribute to the ATP site. Tyr-118 contacts substrate. An ATP-binding site is contributed by 244-245 (EL). Glu-251 contacts substrate. Position 300 (Gly-300) interacts with ATP.

The protein belongs to the class-II aminoacyl-tRNA synthetase family. EpmA subfamily. In terms of assembly, homodimer.

The catalysed reaction is D-beta-lysine + L-lysyl-[protein] + ATP = N(6)-((3R)-3,6-diaminohexanoyl)-L-lysyl-[protein] + AMP + diphosphate + H(+). Its function is as follows. With EpmB is involved in the beta-lysylation step of the post-translational modification of translation elongation factor P (EF-P) on 'Lys-34'. Catalyzes the ATP-dependent activation of (R)-beta-lysine produced by EpmB, forming a lysyl-adenylate, from which the beta-lysyl moiety is then transferred to the epsilon-amino group of EF-P 'Lys-34'. This is Elongation factor P--(R)-beta-lysine ligase from Salmonella agona (strain SL483).